Consider the following 298-residue polypeptide: Apolipoprotein E (298 aa).

A signal peptide spans 1-18 (MKILWAALVLTLLAGCRA). Repeat copies occupy residues 74-95 (LLME…KEVG), 96-117 (PMAE…ARLA), 118-139 (GDME…AMLG), 140-161 (QSSE…KRLQ), 162-183 (RDAE…EGAE), and 223-244 (GRLE…EQME). Positions 74–244 (LLMEDTMKEL…RLEEVREQME (171 aa)) are 8 X 22 AA approximate tandem repeats. M137 carries the methionine sulfoxide modification. Phosphoserine is present on S141. Positions 152-162 (HLRKLRKRLQR) are LDL and other lipoprotein receptors binding. 156–159 (LRKR) is a heparin binding site. The segment at 204–272 (ALTSHPLRER…SWFEPMVEDL (69 aa)) is lipid-binding and lipoprotein association. 218–225 (GEQVRGRL) contacts heparin. The segment at 260-272 (RLKSWFEPMVEDL) is specificity for association with VLDL.

The protein belongs to the apolipoprotein A1/A4/E family. In terms of assembly, homotetramer. May interact with ABCA1; functionally associated with ABCA1 in the biogenesis of HDLs. May interact with APP/A4 amyloid-beta peptide; the interaction is extremely stable in vitro but its physiological significance is unclear. May interact with MAPT. May interact with MAP2. In the cerebrospinal fluid, interacts with secreted SORL1. Interacts with PMEL; this allows the loading of PMEL luminal fragment on ILVs to induce fibril nucleation. APOE exists as multiple glycosylated and sialylated glycoforms within cells and in plasma. The extent of glycosylation and sialylation are tissue and context specific. In terms of processing, glycated in plasma VLDL. Post-translationally, phosphorylated by FAM20C in the extracellular medium.

It is found in the secreted. The protein resides in the extracellular space. The protein localises to the extracellular matrix. Its subcellular location is the extracellular vesicle. It localises to the endosome. It is found in the multivesicular body. In terms of biological role, APOE is an apolipoprotein, a protein associating with lipid particles, that mainly functions in lipoprotein-mediated lipid transport between organs via the plasma and interstitial fluids. APOE is a core component of plasma lipoproteins and is involved in their production, conversion and clearance. Apolipoproteins are amphipathic molecules that interact both with lipids of the lipoprotein particle core and the aqueous environment of the plasma. As such, APOE associates with chylomicrons, chylomicron remnants, very low density lipoproteins (VLDL) and intermediate density lipoproteins (IDL) but shows a preferential binding to high-density lipoproteins (HDL). It also binds a wide range of cellular receptors including the LDL receptor/LDLR, the LDL receptor-related proteins LRP1, LRP2 and LRP8 and the very low-density lipoprotein receptor/VLDLR that mediate the cellular uptake of the APOE-containing lipoprotein particles. Finally, APOE also has a heparin-binding activity and binds heparan-sulfate proteoglycans on the surface of cells, a property that supports the capture and the receptor-mediated uptake of APOE-containing lipoproteins by cells. A main function of APOE is to mediate lipoprotein clearance through the uptake of chylomicrons, VLDLs, and HDLs by hepatocytes. APOE is also involved in the biosynthesis by the liver of VLDLs as well as their uptake by peripheral tissues ensuring the delivery of triglycerides and energy storage in muscle, heart and adipose tissues. By participating in the lipoprotein-mediated distribution of lipids among tissues, APOE plays a critical role in plasma and tissues lipid homeostasis. APOE is also involved in two steps of reverse cholesterol transport, the HDLs-mediated transport of cholesterol from peripheral tissues to the liver, and thereby plays an important role in cholesterol homeostasis. First, it is functionally associated with ABCA1 in the biogenesis of HDLs in tissues. Second, it is enriched in circulating HDLs and mediates their uptake by hepatocytes. APOE also plays an important role in lipid transport in the central nervous system, regulating neuron survival and sprouting. This chain is Apolipoprotein E (APOE), found in Hydrochoerus hydrochaeris (Capybara).